Here is a 117-residue protein sequence, read N- to C-terminus: Holo-[acyl-carrier-protein] synthase (117 aa).

Positions 6 and 55 each coordinate Mg(2+).

This sequence belongs to the P-Pant transferase superfamily. AcpS family. Mg(2+) is required as a cofactor.

It localises to the cytoplasm. It carries out the reaction apo-[ACP] + CoA = holo-[ACP] + adenosine 3',5'-bisphosphate + H(+). Its function is as follows. Transfers the 4'-phosphopantetheine moiety from coenzyme A to a Ser of acyl-carrier-protein. The chain is Holo-[acyl-carrier-protein] synthase from Chlorobaculum parvum (strain DSM 263 / NCIMB 8327) (Chlorobium vibrioforme subsp. thiosulfatophilum).